A 25-amino-acid polypeptide reads, in one-letter code: GIEKIISRSMFDQMLKHRNNPASFG.

It belongs to the glycosyl hydrolase 19 family. Chitinase class I subfamily. As to quaternary structure, monomer.

The protein localises to the secreted. It localises to the extracellular space. The enzyme catalyses Random endo-hydrolysis of N-acetyl-beta-D-glucosaminide (1-&gt;4)-beta-linkages in chitin and chitodextrins.. The catalysed reaction is Hydrolysis of (1-&gt;4)-beta-linkages between N-acetylmuramic acid and N-acetyl-D-glucosamine residues in a peptidoglycan and between N-acetyl-D-glucosamine residues in chitodextrins.. Bifunctional enzyme with lysozyme/chitinase activity. The chain is Bifunctional chitinase/lysozyme from Carica papaya (Papaya).